The primary structure comprises 143 residues: Transcription antitermination protein NusB (143 aa).

It belongs to the NusB family.

In terms of biological role, involved in transcription antitermination. Required for transcription of ribosomal RNA (rRNA) genes. Binds specifically to the boxA antiterminator sequence of the ribosomal RNA (rrn) operons. In Methylacidiphilum infernorum (isolate V4) (Methylokorus infernorum (strain V4)), this protein is Transcription antitermination protein NusB.